A 251-amino-acid polypeptide reads, in one-letter code: Triosephosphate isomerase 1 (251 aa).

9-11 (NWK) contributes to the substrate binding site. The Electrophile role is filled by H95. Catalysis depends on E167, which acts as the Proton acceptor. Substrate contacts are provided by residues G173, S213, and 234 to 235 (GG).

This sequence belongs to the triosephosphate isomerase family. In terms of assembly, homodimer.

It is found in the cytoplasm. It catalyses the reaction D-glyceraldehyde 3-phosphate = dihydroxyacetone phosphate. It participates in carbohydrate biosynthesis; gluconeogenesis. It functions in the pathway carbohydrate degradation; glycolysis; D-glyceraldehyde 3-phosphate from glycerone phosphate: step 1/1. Functionally, involved in the gluconeogenesis. Catalyzes stereospecifically the conversion of dihydroxyacetone phosphate (DHAP) to D-glyceraldehyde-3-phosphate (G3P). This chain is Triosephosphate isomerase 1, found in Listeria innocua serovar 6a (strain ATCC BAA-680 / CLIP 11262).